We begin with the raw amino-acid sequence, 350 residues long: MRYSTVLAALALLGTSAVSVLAALPDQIDVKVKNLTPEDTIYDRTRQVFYQSNLYKGRIEVYNPKTQSHFNVVIDGASSNGDGEQQMSGLSLLTHDNSKRLFAVMKNAKSFNFADQSSHGASSFHSFNLPLSENSKPVWSVNFEKVQDEFEKKAGKRPFGVVQSAQDRDGNSYVAFALGMPAIARVSADGKTVSTFAWESGNGGQRPGYSGITFDPHSNKLIAFGGPRALTAFDVSKPYAWPEPVKINGDFGTLSGTEKIVTVPVGNESVLVGARAPYAISFRSWDNWKSANIKKTKRSELQNSGFTAVADYYQGSEQGLYAVSAFFDNGAHGGRSDYPLYKLDNSILNF.

Positions 1–22 (MRYSTVLAALALLGTSAVSVLA) are cleaved as a signal peptide.

The protein localises to the secreted. The protein resides in the cell wall. This chain is Major allergen Mal f 1, found in Malassezia furfur (Pityriasis versicolor infection agent).